A 251-amino-acid polypeptide reads, in one-letter code: Hydroxyacylglutathione hydrolase (251 aa).

7 residues coordinate Zn(2+): H53, H55, D57, H58, H110, D127, and H165.

The protein belongs to the metallo-beta-lactamase superfamily. Glyoxalase II family. Monomer. Zn(2+) serves as cofactor.

It carries out the reaction an S-(2-hydroxyacyl)glutathione + H2O = a 2-hydroxy carboxylate + glutathione + H(+). It participates in secondary metabolite metabolism; methylglyoxal degradation; (R)-lactate from methylglyoxal: step 2/2. In terms of biological role, thiolesterase that catalyzes the hydrolysis of S-D-lactoyl-glutathione to form glutathione and D-lactic acid. The protein is Hydroxyacylglutathione hydrolase of Buchnera aphidicola subsp. Acyrthosiphon pisum (strain APS) (Acyrthosiphon pisum symbiotic bacterium).